Consider the following 358-residue polypeptide: Phenylalanine--tRNA ligase alpha subunit (358 aa).

Glutamate 258 lines the Mg(2+) pocket.

This sequence belongs to the class-II aminoacyl-tRNA synthetase family. Phe-tRNA synthetase alpha subunit type 1 subfamily. As to quaternary structure, tetramer of two alpha and two beta subunits. It depends on Mg(2+) as a cofactor.

It localises to the cytoplasm. The catalysed reaction is tRNA(Phe) + L-phenylalanine + ATP = L-phenylalanyl-tRNA(Phe) + AMP + diphosphate + H(+). The sequence is that of Phenylalanine--tRNA ligase alpha subunit from Rhodospirillum centenum (strain ATCC 51521 / SW).